The chain runs to 561 residues: Asparagine synthetase [glutamine-hydrolyzing] (561 aa).

Catalysis depends on Cys-2, which acts as the For GATase activity. One can recognise a Glutamine amidotransferase type-2 domain in the interval 2 to 191 (CGIWALFGSD…PGHYEVLDLK (190 aa)). Residues 49-53 (RLAVV), 75-77 (NGE), and Asp-97 contribute to the L-glutamine site. One can recognise an Asparagine synthetase domain in the interval 213 to 536 (HAACDTVGNL…PGRSSWLPHY (324 aa)). ATP contacts are provided by residues Leu-256, Ile-288, and 363 to 364 (SG).

The catalysed reaction is L-aspartate + L-glutamine + ATP + H2O = L-asparagine + L-glutamate + AMP + diphosphate + H(+). The protein operates within amino-acid biosynthesis; L-asparagine biosynthesis; L-asparagine from L-aspartate (L-Gln route): step 1/1. The protein is Asparagine synthetase [glutamine-hydrolyzing] (ASNS) of Gallus gallus (Chicken).